Here is a 226-residue protein sequence, read N- to C-terminus: ATP synthase F(0) complex subunit a (226 aa).

6 consecutive transmembrane segments (helical) span residues 12 to 32 (PTILGLPAAVPIILFPSLLIP), 68 to 88 (WSLMLISLITFIATTNLLGLL), 97 to 117 (QLSMNLAMAIPLWAGTVATGF), 138 to 158 (IPMLIIIETISLFIQPVALAV), 164 to 184 (ITAGHLLMHLIGAATMALSTI), and 200 to 222 (TTLEIAVALIQAYVFTLLVSLYL).

This sequence belongs to the ATPase A chain family. In terms of assembly, component of the ATP synthase complex composed at least of ATP5F1A/subunit alpha, ATP5F1B/subunit beta, ATP5MC1/subunit c (homooctomer), MT-ATP6/subunit a, MT-ATP8/subunit 8, ATP5ME/subunit e, ATP5MF/subunit f, ATP5MG/subunit g, ATP5MK/subunit k, ATP5MJ/subunit j, ATP5F1C/subunit gamma, ATP5F1D/subunit delta, ATP5F1E/subunit epsilon, ATP5PF/subunit F6, ATP5PB/subunit b, ATP5PD/subunit d, ATP5PO/subunit OSCP. ATP synthase complex consists of a soluble F(1) head domain (subunits alpha(3) and beta(3)) - the catalytic core - and a membrane F(0) domain - the membrane proton channel (subunits c, a, 8, e, f, g, k and j). These two domains are linked by a central stalk (subunits gamma, delta, and epsilon) rotating inside the F1 region and a stationary peripheral stalk (subunits F6, b, d, and OSCP). Interacts with DNAJC30; interaction is direct.

Its subcellular location is the mitochondrion inner membrane. The enzyme catalyses H(+)(in) = H(+)(out). Functionally, subunit a, of the mitochondrial membrane ATP synthase complex (F(1)F(0) ATP synthase or Complex V) that produces ATP from ADP in the presence of a proton gradient across the membrane which is generated by electron transport complexes of the respiratory chain. ATP synthase complex consist of a soluble F(1) head domain - the catalytic core - and a membrane F(1) domain - the membrane proton channel. These two domains are linked by a central stalk rotating inside the F(1) region and a stationary peripheral stalk. During catalysis, ATP synthesis in the catalytic domain of F(1) is coupled via a rotary mechanism of the central stalk subunits to proton translocation. With the subunit c (ATP5MC1), forms the proton-conducting channel in the F(0) domain, that contains two crucial half-channels (inlet and outlet) that facilitate proton movement from the mitochondrial intermembrane space (IMS) into the matrix. Protons are taken up via the inlet half-channel and released through the outlet half-channel, following a Grotthuss mechanism. The polypeptide is ATP synthase F(0) complex subunit a (Hylobates lar (Lar gibbon)).